The primary structure comprises 78 residues: Exodeoxyribonuclease 7 small subunit (78 aa).

This sequence belongs to the XseB family. Heterooligomer composed of large and small subunits.

Its subcellular location is the cytoplasm. It catalyses the reaction Exonucleolytic cleavage in either 5'- to 3'- or 3'- to 5'-direction to yield nucleoside 5'-phosphates.. Its function is as follows. Bidirectionally degrades single-stranded DNA into large acid-insoluble oligonucleotides, which are then degraded further into small acid-soluble oligonucleotides. The polypeptide is Exodeoxyribonuclease 7 small subunit (Paracoccus zeaxanthinifaciens).